Here is a 467-residue protein sequence, read N- to C-terminus: MDTKHFLPLDFSTQVNSSSLSSPTGRGSMAAPSLHPSLGPGLGSPLGSPGQLHSPISTLSSPINGMGPPFSVISSPMGPHSMSVPTTPTLGFETGSPQLNSPMNPVSSSEDIKPPLGLNGVLKVPAHPSGNMSSFTKHICAICGDRSSGKHYGVYSCEGCKGFFKRTVRKDLTYTCRDNKDCLIDKRQRNRCQYCRYQKCLAMGMKREAVQEERQRGKDRNENEVESTSSANEDMPVEKILEAELAVEPKTETYVEANMGLNPSSPNDPVTNICQAADKQLFTLVEWAKRIPHFSELPLDDQVILLRAGWNELLIASFSHRSIAVKDGILLATGLHVHRNSAHSAGVGAIFDRVLTELVSKMRDMQMDKTELGCLRAIVLFNPDSKGLSNPAEVEALREKVYASLEAYCKHKYPEQPGRFAKLLLRLPALRSIGLKCLEHLFFFKLIGDTPIDTFLMEMLEAPHQTT.

Residues 1-61 (MDTKHFLPLD…LHSPISTLSS (61 aa)) form a disordered region. A modulating region spans residues 1–139 (MDTKHFLPLD…GNMSSFTKHI (139 aa)). Residue Lys4 forms a Glycyl lysine isopeptide (Lys-Gly) (interchain with G-Cter in SUMO2) linkage. Phosphoserine occurs at positions 22 and 28. Positions 32–55 (PSLHPSLGPGLGSPLGSPGQLHSP) are enriched in low complexity. Ser61 and Ser75 each carry phosphoserine; by MAPK8 and MAPK9. The disordered stretch occupies residues 79–109 (PHSMSVPTTPTLGFETGSPQLNSPMNPVSSS). Polar residues predominate over residues 83–109 (SVPTTPTLGFETGSPQLNSPMNPVSSS). Phosphothreonine; by MAPK8 and MAPK9 is present on Thr87. A Glycyl lysine isopeptide (Lys-Gly) (interchain with G-Cter in SUMO) cross-link involves residue Lys113. Ser134 is subject to Phosphoserine. Residues Cys140 and Cys143 each coordinate Zn(2+). Residues 140 to 160 (CAICGDRSSGKHYGVYSCEGC) form an NR C4-type zinc finger. The nuclear receptor DNA-binding region spans 140–205 (CAICGDRSSG…RYQKCLAMGM (66 aa)). Lys150 bears the N6-acetyllysine mark. Zn(2+) is bound by residues Cys157 and Cys160. The interval 165–170 (KRTVRK) is nuclear localization signal. Cys176, Cys182, Cys192, and Cys195 together coordinate Zn(2+). The NR C4-type zinc-finger motif lies at 176-200 (CRDNKDCLIDKRQRNRCQYCRYQKC). The tract at residues 206–229 (KREAVQEERQRGKDRNENEVESTS) is hinge. The segment covering 211-223 (QEERQRGKDRNEN) has biased composition (basic and acidic residues). A disordered region spans residues 211 to 233 (QEERQRGKDRNENEVESTSSANE). The NR LBD domain occupies 232–463 (NEDMPVEKIL…TFLMEMLEAP (232 aa)). The residue at position 264 (Ser264) is a Phosphoserine. At Ser265 the chain carries Phosphoserine; by MAPK8 and MAPK9. Arg321 and Ala332 together coordinate 9-cis-retinoate. The all-trans-retinoate site is built by Arg321 and Ala332. Residues 353–373 (RVLTELVSKMRDMQMDKTELG) are required for nuclear export.

This sequence belongs to the nuclear hormone receptor family. NR2 subfamily. Homodimer. Heterodimer (via C-terminus) with RARA; required for ligand-dependent retinoic acid receptor transcriptional activity; association with RARA is enhanced by pulsatile shear stress. Heterodimer with PPARA (via the leucine-like zipper in the LBD); the interaction is required for PPARA transcriptional activity. Heterodimerizes with PPARG. Heterodimerizes (via NR LBD) with RARB. Heterodimerizes with NR1H4; the heterodimerization enhances the binding affinity for LXXLL motifs from coactivators. Interacts with NCOA3 and NCOA6 coactivators. Interacts with FAM120B. Interacts with coactivator PELP1, SENP6, SFPQ, DNTTIP2 and RNF8. Interacts with PRMT2. Interacts with ASXL1. Interacts with BHLHE40/DEC1, BHLHE41/DEC2, MED1, NCOR1 and NCOR2. Interacts in a ligand-dependent fashion with MED1 and NCOA1. Interacts with VDR. Interacts with EP300; the interaction is decreased by 9-cis retinoic acid. Heterodimer (via C-terminus) with NR4A1 (DNA-binding domain); the interaction is enhanced by 9-cis retinoic acid. NR4A1 competes with EP300 for interaction with RXRA and thereby attenuates EP300 mediated acetylation of RXRA. In the absence of hormonal ligand, interacts with TACC1. Interacts ith IGFBP3. Phosphorylated on serine and threonine residues mainly in the N-terminal modulating domain. Constitutively phosphorylated on Ser-22 in the presence or absence of ligand. Under stress conditions, hyperphosphorylated by activated JNK on Ser-61, Ser-75, Thr-87 and Ser-265. Phosphorylated on Ser-28, in vitro, by PKA. This phosphorylation is required for repression of cAMP-mediated transcriptional activity of RARA. In terms of processing, ubiquitinated by UBR5, leading to its degradation: UBR5 specifically recognizes and binds ligand-bound RXRA when it is not associated with coactivators (NCOAs). In presence of NCOAs, the UBR5-degron is not accessible, preventing its ubiquitination and degradation. Post-translationally, sumoylation negatively regulates transcriptional activity. Desumoylated specifically by SENP6. Acetylated by EP300; acetylation enhances DNA binding and transcriptional activity. Expressed in the adrenal gland with main expression in the zona fasciculata and medulla (at protein level). Expressed in aortic endothelial cells, with high expression in the descending thoracic aorta and the outer curvature of the aortic arch, where pulsatory shear stress exists, but very low in the inner curvature of the aortic arch, where oscillatory shear stress prevails (at protein level).

The protein localises to the nucleus. It localises to the cytoplasm. The protein resides in the mitochondrion. Functionally, receptor for retinoic acid that acts as a transcription factor. Forms homo- or heterodimers with retinoic acid receptors (RARs) and binds to target response elements in response to their ligands, all-trans or 9-cis retinoic acid, to regulate gene expression in various biological processes. The RAR/RXR heterodimers bind to the retinoic acid response elements (RARE) composed of tandem 5'-AGGTCA-3' sites known as DR1-DR5 to regulate transcription. The high affinity ligand for retinoid X receptors (RXRs) is 9-cis retinoic acid. In the absence of ligand, the RXR-RAR heterodimers associate with a multiprotein complex containing transcription corepressors that induce histone deacetylation, chromatin condensation and transcriptional suppression. On ligand binding, the corepressors dissociate from the receptors and coactivators are recruited leading to transcriptional activation. Serves as a common heterodimeric partner for a number of nuclear receptors, such as RARA, RARB and PPARA. The RXRA/RARB heterodimer can act as a transcriptional repressor or transcriptional activator, depending on the RARE DNA element context. The RXRA/PPARA heterodimer is required for PPARA transcriptional activity on fatty acid oxidation genes such as ACOX1 and the P450 system genes. Together with RARA, positively regulates microRNA-10a expression, thereby inhibiting the GATA6/VCAM1 signaling response to pulsatile shear stress in vascular endothelial cells. Acts as an enhancer of RARA binding to RARE DNA element. May facilitate the nuclear import of heterodimerization partners such as VDR and NR4A1. Promotes myelin debris phagocytosis and remyelination by macrophages. Plays a role in the attenuation of the innate immune system in response to viral infections, possibly by negatively regulating the transcription of antiviral genes such as type I IFN genes. Involved in the regulation of calcium signaling by repressing ITPR2 gene expression, thereby controlling cellular senescence. In Rattus norvegicus (Rat), this protein is Retinoic acid receptor RXR-alpha (Rxra).